The chain runs to 197 residues: Holliday junction branch migration complex subunit RuvA (197 aa).

The domain I stretch occupies residues 1-64 (MIGRLRGIVA…EDSVSLYGFL (64 aa)). The tract at residues 65–143 (REGERRLFRD…QFGAGGALPT (79 aa)) is domain II. The flexible linker stretch occupies residues 144–153 (GSGPAPADPL). The segment at 153–197 (LSDATVALQQLGYKPAEAARMAREAFNEGDEVAIVIRKALQSALR) is domain III.

This sequence belongs to the RuvA family. As to quaternary structure, homotetramer. Forms an RuvA(8)-RuvB(12)-Holliday junction (HJ) complex. HJ DNA is sandwiched between 2 RuvA tetramers; dsDNA enters through RuvA and exits via RuvB. An RuvB hexamer assembles on each DNA strand where it exits the tetramer. Each RuvB hexamer is contacted by two RuvA subunits (via domain III) on 2 adjacent RuvB subunits; this complex drives branch migration. In the full resolvosome a probable DNA-RuvA(4)-RuvB(12)-RuvC(2) complex forms which resolves the HJ.

The protein resides in the cytoplasm. In terms of biological role, the RuvA-RuvB-RuvC complex processes Holliday junction (HJ) DNA during genetic recombination and DNA repair, while the RuvA-RuvB complex plays an important role in the rescue of blocked DNA replication forks via replication fork reversal (RFR). RuvA specifically binds to HJ cruciform DNA, conferring on it an open structure. The RuvB hexamer acts as an ATP-dependent pump, pulling dsDNA into and through the RuvAB complex. HJ branch migration allows RuvC to scan DNA until it finds its consensus sequence, where it cleaves and resolves the cruciform DNA. This Stenotrophomonas maltophilia (strain R551-3) protein is Holliday junction branch migration complex subunit RuvA.